Consider the following 104-residue polypeptide: Flagellar hook-basal body complex protein FliE (104 aa).

This sequence belongs to the FliE family.

The protein localises to the bacterial flagellum basal body. This chain is Flagellar hook-basal body complex protein FliE, found in Serratia proteamaculans (strain 568).